The following is a 277-amino-acid chain: 2-dehydro-3-deoxyphosphooctonate aldolase (277 aa).

Belongs to the KdsA family.

It is found in the cytoplasm. The catalysed reaction is D-arabinose 5-phosphate + phosphoenolpyruvate + H2O = 3-deoxy-alpha-D-manno-2-octulosonate-8-phosphate + phosphate. It participates in carbohydrate biosynthesis; 3-deoxy-D-manno-octulosonate biosynthesis; 3-deoxy-D-manno-octulosonate from D-ribulose 5-phosphate: step 2/3. The protein operates within bacterial outer membrane biogenesis; lipopolysaccharide biosynthesis. In Brucella anthropi (strain ATCC 49188 / DSM 6882 / CCUG 24695 / JCM 21032 / LMG 3331 / NBRC 15819 / NCTC 12168 / Alc 37) (Ochrobactrum anthropi), this protein is 2-dehydro-3-deoxyphosphooctonate aldolase.